Consider the following 76-residue polypeptide: MQLVLAAKYIGAGISTIGLLGAGIGIAIVFAALIQGVSRNPSMKDTLFQFAILGFAISEATGLFCLMISFLLLYGV.

The next 2 membrane-spanning stretches (helical) occupy residues 13 to 35 and 50 to 72; these read GISTIGLLGAGIGIAIVFAALIQ and FAILGFAISEATGLFCLMISFLL.

This sequence belongs to the ATPase C chain family. In terms of assembly, F-type ATPases have 2 components, CF(1) - the catalytic core - and CF(0) - the membrane proton channel. In yeast, the dimeric form of ATP synthase consists of 18 polypeptides: alpha, beta, gamma, delta, epsilon, 4 (B), 5 (OSCP), 6 (A), 8, 9 (C), d, E (Tim11), f, g, h, i, j and k.

It localises to the mitochondrion membrane. Its function is as follows. Mitochondrial membrane ATP synthase (F(1)F(0) ATP synthase or Complex V) produces ATP from ADP in the presence of a proton gradient across the membrane which is generated by electron transport complexes of the respiratory chain. F-type ATPases consist of two structural domains, F(1) - containing the extramembraneous catalytic core and F(0) - containing the membrane proton channel, linked together by a central stalk and a peripheral stalk. During catalysis, ATP synthesis in the catalytic domain of F(1) is coupled via a rotary mechanism of the central stalk subunits to proton translocation. Part of the complex F(0) domain. A homomeric c-ring of probably 10 subunits is part of the complex rotary element. The polypeptide is ATP synthase subunit 9, mitochondrial (ATP9) (Eremothecium gossypii (strain ATCC 10895 / CBS 109.51 / FGSC 9923 / NRRL Y-1056) (Yeast)).